A 570-amino-acid polypeptide reads, in one-letter code: Capsid vertex component 2 (570 aa).

Residues Met1–Trp54 form an interaction with major capsid protein/MCP region. The tract at residues Gln102–Gln123 is disordered.

The protein belongs to the herpesviridae CVC2 protein family. In terms of assembly, heterodimerizes with CVC1. Interacts with major capsid protein/MCP and triplex capsid protein 1/TRX1 at the pentamer vertices. Interacts with the large tegument protein/LTP.

The protein localises to the virion. The protein resides in the host nucleus. Its function is as follows. Capsid vertex-specific component that plays a role during viral DNA encapsidation, assuring correct genome cleavage and presumably stabilizing capsids that contain full-length viral genomes. Participates in the interaction between the capsid and the tegument through interaction with the large tegument protein/LTP. The chain is Capsid vertex component 2 from Homo sapiens (Human).